Reading from the N-terminus, the 111-residue chain is UPF0339 protein BP0521 (111 aa).

A run of 2 repeats spans residues 9 to 57 and 60 to 108. The disordered stretch occupies residues 86 to 111; sequence TQARDNGIASVKSNAPGAPTKDQTQA.

Belongs to the UPF0339 family. Duplicated subfamily.

The sequence is that of UPF0339 protein BP0521 from Bordetella pertussis (strain Tohama I / ATCC BAA-589 / NCTC 13251).